The chain runs to 302 residues: tRNA dimethylallyltransferase (302 aa).

10–17 lines the ATP pocket; sequence GPTATGKS. 12–17 contributes to the substrate binding site; that stretch reads TATGKS. Positions 35–38 are interaction with substrate tRNA; sequence DSRQ.

This sequence belongs to the IPP transferase family. As to quaternary structure, monomer. Requires Mg(2+) as cofactor.

The enzyme catalyses adenosine(37) in tRNA + dimethylallyl diphosphate = N(6)-dimethylallyladenosine(37) in tRNA + diphosphate. In terms of biological role, catalyzes the transfer of a dimethylallyl group onto the adenine at position 37 in tRNAs that read codons beginning with uridine, leading to the formation of N6-(dimethylallyl)adenosine (i(6)A). This chain is tRNA dimethylallyltransferase, found in Acaryochloris marina (strain MBIC 11017).